We begin with the raw amino-acid sequence, 292 residues long: tRNA-cytidine(32) 2-sulfurtransferase (292 aa).

The short motif at 62–67 is the PP-loop motif element; the sequence is SGGKDS. Residues Cys-137, Cys-140, and Cys-228 each contribute to the [4Fe-4S] cluster site.

The protein belongs to the TtcA family. Homodimer. The cofactor is Mg(2+). [4Fe-4S] cluster is required as a cofactor.

It localises to the cytoplasm. The enzyme catalyses cytidine(32) in tRNA + S-sulfanyl-L-cysteinyl-[cysteine desulfurase] + AH2 + ATP = 2-thiocytidine(32) in tRNA + L-cysteinyl-[cysteine desulfurase] + A + AMP + diphosphate + H(+). It participates in tRNA modification. Functionally, catalyzes the ATP-dependent 2-thiolation of cytidine in position 32 of tRNA, to form 2-thiocytidine (s(2)C32). The sulfur atoms are provided by the cysteine/cysteine desulfurase (IscS) system. This is tRNA-cytidine(32) 2-sulfurtransferase from Brucella anthropi (strain ATCC 49188 / DSM 6882 / CCUG 24695 / JCM 21032 / LMG 3331 / NBRC 15819 / NCTC 12168 / Alc 37) (Ochrobactrum anthropi).